The chain runs to 337 residues: GTPase Obg (337 aa).

The Obg domain occupies 1–158; that stretch reads MFVDRVIIEL…HHIELELKLI (158 aa). The OBG-type G domain occupies 159–330; that stretch reads ADVGLVGFPN…LIEKMTQRLS (172 aa). GTP is bound by residues 165-172, 190-194, 212-215, 282-285, and 311-313; these read GFPNAGKS, FTTLQ, DIPG, NKID, and SAV. The Mg(2+) site is built by Ser172 and Thr192.

The protein belongs to the TRAFAC class OBG-HflX-like GTPase superfamily. OBG GTPase family. As to quaternary structure, monomer. The cofactor is Mg(2+).

It is found in the cytoplasm. Its function is as follows. An essential GTPase which binds GTP, GDP and possibly (p)ppGpp with moderate affinity, with high nucleotide exchange rates and a fairly low GTP hydrolysis rate. Plays a role in control of the cell cycle, stress response, ribosome biogenesis and in those bacteria that undergo differentiation, in morphogenesis control. The protein is GTPase Obg of Protochlamydia amoebophila (strain UWE25).